The following is a 629-amino-acid chain: tRNA uridine 5-carboxymethylaminomethyl modification enzyme MnmG (629 aa).

FAD-binding positions include 13–18, Val125, and Ser180; that span reads GGGHAG. 273 to 287 serves as a coordination point for NAD(+); it reads GPRYCPSIEDKVMRF. Gln370 lines the FAD pocket.

This sequence belongs to the MnmG family. As to quaternary structure, homodimer. Heterotetramer of two MnmE and two MnmG subunits. Requires FAD as cofactor.

Its subcellular location is the cytoplasm. Its function is as follows. NAD-binding protein involved in the addition of a carboxymethylaminomethyl (cmnm) group at the wobble position (U34) of certain tRNAs, forming tRNA-cmnm(5)s(2)U34. The polypeptide is tRNA uridine 5-carboxymethylaminomethyl modification enzyme MnmG (Shigella sonnei (strain Ss046)).